Reading from the N-terminus, the 287-residue chain is Toxin zeta (287 aa).

40-47 (GQPGSGKT) provides a ligand contact to ATP. N66 provides a ligand contact to substrate. Residue D67 is the Proton acceptor of the active site. Substrate-binding residues include E100, T118, R120, and T128. The interval 267–287 (KLESLQPPTPPIPKTPKLPGI) is disordered. Over residues 273-287 (PPTPPIPKTPKLPGI) the composition is skewed to pro residues.

It belongs to the zeta toxin family. As to quaternary structure, in the presence of the epsilon antitoxin forms an inactive PezA(2)PezT(2) heterotetramer. The heterotetramer is still able to bind the UNAG substrate.

The catalysed reaction is UDP-N-acetyl-alpha-D-glucosamine + ATP = UDP-N-acetyl-alpha-D-glucosamine 3'-phosphate + ADP + H(+). Functionally, toxic component of a type II toxin-antitoxin (TA) system. Phosphorylates UDP-N-acetyl-D-glucosamine (UNAG) on the 3'-hydroxyl group of the N-acetyl-D-glucosamine moiety, yielding UNAG-3P. UNAG-3P inhibits MurA, the first committed step in cell wall synthesis, which is then blocked. Phosphorylation is inhibited by cognate epsilon antitoxin. Part of a postsegregational killing (PSK) system involved in the killing of plasmid-free cells. The zeta toxin induces programmed cell death. This is Toxin zeta from Streptococcus pyogenes.